We begin with the raw amino-acid sequence, 475 residues long: Putative aldehyde dehydrogenase (475 aa).

NAD(+) is bound by residues 146–147 and 223–224; these read WN and GS. Glutamate 245 functions as the Proton acceptor in the catalytic mechanism. Residue leucine 246 participates in NAD(+) binding. Cysteine 279 (nucleophile) is an active-site residue. Position 379 (glutamate 379) interacts with NAD(+).

This sequence belongs to the aldehyde dehydrogenase family.

The catalysed reaction is an aldehyde + NAD(+) + H2O = a carboxylate + NADH + 2 H(+). This Staphylococcus aureus (strain bovine RF122 / ET3-1) protein is Putative aldehyde dehydrogenase.